The sequence spans 1012 residues: Ubiquitin-activating enzyme E1 1 (1012 aa).

ATP is bound at residue arginine 22. Serine 264 carries the phosphoserine modification. 2 residues coordinate ATP: alanine 437 and aspartate 463. Mg(2+)-binding residues include aspartate 465 and glutamate 468. Positions 471, 474, 487, 513, 537, and 538 each coordinate ATP. Residue aspartate 537 participates in Mg(2+) binding. Lysine 588 is covalently cross-linked (Glycyl lysine isopeptide (Lys-Gly) (interchain with G-Cter in ubiquitin)). Cysteine 593 serves as the catalytic Glycyl thioester intermediate. At serine 903 the chain carries Phosphoserine.

It belongs to the ubiquitin-activating E1 family. As to quaternary structure, monomer. Interacts with the E2 ubiquitin-conjugating enzyme ubc4.

The protein localises to the cytoplasm. The protein resides in the nucleus. It carries out the reaction ATP + ubiquitin + [E1 ubiquitin-activating enzyme]-L-cysteine = AMP + diphosphate + S-ubiquitinyl-[E1 ubiquitin-activating enzyme]-L-cysteine.. The protein operates within protein modification; protein ubiquitination. Its activity is regulated as follows. Ubiquitin transfer between the E1 ubiquitin-activating enzyme ptr3 and E2 ubiquitin-conjugating enzyme ubc4 is enhanced by the presence of magnesium and ATP, or adenylated ubiquitin. Functionally, E1 ubiquitin-activating enzyme that catalyzes the first step in ubiquitin conjugation to mark cellular proteins for degradation through the ubiquitin-proteasome system. Activates ubiquitin by first adenylating its C-terminal glycine residue with ATP, and thereafter linking this residue to the side chain of a cysteine residue in E1, yielding a ubiquitin-E1 thioester and free AMP. The protein is Ubiquitin-activating enzyme E1 1 (ptr3) of Schizosaccharomyces pombe (strain 972 / ATCC 24843) (Fission yeast).